A 380-amino-acid chain; its full sequence is Outer mitochondrial transmembrane helix translocase (380 aa).

Residues 1 to 18 (MLSDIPRDALLRPLTRNE) are Mitochondrial intermembrane-facing. A helical membrane pass occupies residues 19-37 (VVGMLVRLTVFGAATYYSI). The Cytoplasmic portion of the chain corresponds to 38 to 380 (KWVVDALDPT…PANLREVPLD (343 aa)). 136 to 143 (GPPGCGKT) is a binding site for ATP.

It belongs to the AAA ATPase family. MSP1 subfamily.

The protein localises to the mitochondrion outer membrane. It localises to the peroxisome membrane. It is found in the postsynaptic cell membrane. It carries out the reaction [protein]-with a C-terminal TM segment(out) + ATP + H2O = [protein]-with a C-terminal TM segment(in) + ADP + phosphate + H(+). In terms of biological role, outer mitochondrial translocase required to remove mislocalized tail-anchored transmembrane proteins on mitochondria. Specifically recognizes and binds tail-anchored transmembrane proteins: acts as a dislocase that mediates the ATP-dependent extraction of mistargeted tail-anchored transmembrane proteins from the mitochondrion outer membrane. Also plays a critical role in regulating the surface expression of AMPA receptors (AMPAR), thereby regulating synaptic plasticity and learning and memory. This Danio rerio (Zebrafish) protein is Outer mitochondrial transmembrane helix translocase.